We begin with the raw amino-acid sequence, 218 residues long: Hypoxanthine-guanine phosphoribosyltransferase (218 aa).

A2 carries the post-translational modification N-acetylalanine. Residue K69 coordinates GMP. K103 bears the N6-acetyllysine mark. K115 participates in a covalent cross-link: Glycyl lysine isopeptide (Lys-Gly) (interchain with G-Cter in SUMO1); alternate. K115 participates in a covalent cross-link: Glycyl lysine isopeptide (Lys-Gly) (interchain with G-Cter in SUMO2); alternate. GMP is bound by residues 134–142 (EDIIDTGKT), K166, 186–188 (KFV), and D194. D138 (proton acceptor) is an active-site residue. Position 142 is a phosphothreonine (T142). D194 is a Mg(2+) binding site.

Belongs to the purine/pyrimidine phosphoribosyltransferase family. Homotetramer. The cofactor is Mg(2+).

The protein resides in the cytoplasm. It catalyses the reaction IMP + diphosphate = hypoxanthine + 5-phospho-alpha-D-ribose 1-diphosphate. The enzyme catalyses GMP + diphosphate = guanine + 5-phospho-alpha-D-ribose 1-diphosphate. It participates in purine metabolism; IMP biosynthesis via salvage pathway; IMP from hypoxanthine: step 1/1. Its function is as follows. Converts guanine to guanosine monophosphate, and hypoxanthine to inosine monophosphate. Transfers the 5-phosphoribosyl group from 5-phosphoribosylpyrophosphate onto the purine. Plays a central role in the generation of purine nucleotides through the purine salvage pathway. The chain is Hypoxanthine-guanine phosphoribosyltransferase (HPRT1) from Homo sapiens (Human).